The following is a 155-amino-acid chain: Ribosome maturation factor RimP (155 aa).

It belongs to the RimP family.

The protein resides in the cytoplasm. Functionally, required for maturation of 30S ribosomal subunits. This chain is Ribosome maturation factor RimP, found in Dichelobacter nodosus (strain VCS1703A).